The chain runs to 74 residues: U-scoloptoxin(09)-Sm3a (74 aa).

Residues 1 to 22 form the signal peptide; the sequence is MNANSIFLCFFIMLIGCTLTHS.

Belongs to the scoloptoxin-09 family. In terms of processing, contains 3 disulfide bonds. In terms of tissue distribution, expressed by the venom gland.

Its subcellular location is the secreted. This is U-scoloptoxin(09)-Sm3a from Scolopendra morsitans (Tanzanian blue ringleg centipede).